Here is a 191-residue protein sequence, read N- to C-terminus: Small ribosomal subunit protein uS10c (191 aa).

The N-terminal 56 residues, 1-56, are a transit peptide targeting the chloroplast; it reads MAVSTVSSFLLPSFGIPSSSPSSTRLKVSLLPSSSTHGGLSSCVLTKPSVSLTKVF.

It belongs to the universal ribosomal protein uS10 family. Part of the 30S ribosomal subunit.

It is found in the plastid. The protein localises to the chloroplast. The chain is Small ribosomal subunit protein uS10c (RPS10) from Arabidopsis thaliana (Mouse-ear cress).